The sequence spans 295 residues: Movement protein BC1 (295 aa).

Belongs to the begomovirus movement protein BC1 family. Binds to dimeric supercoiled plasmid DNA. Post-translationally, phosphorylated.

The protein localises to the host cell membrane. The protein resides in the host microsome membrane. It is found in the host endoplasmic reticulum membrane. In terms of biological role, transports viral genome to neighboring plant cells directly through plasmosdesmata, without any budding. The movement protein allows efficient cell to cell propagation, by bypassing the host cell wall barrier. Begomovirus genome is shuttled out of nucleus by Nuclear shuttle protein (NSP) and the movement protein transports the DNA-NSP complex to cell plasmodesmata and facilitates further movement across the cell wall. The protein is Movement protein BC1 of Brassica oleracea (Wild cabbage).